Here is a 475-residue protein sequence, read N- to C-terminus: Ribulose bisphosphate carboxylase large chain (475 aa).

A propeptide spanning residues 1–2 (MS) is cleaved from the precursor. Pro3 bears the N-acetylproline mark. N6,N6,N6-trimethyllysine is present on Lys14. The substrate site is built by Asn123 and Thr173. Lys175 acts as the Proton acceptor in catalysis. Position 177 (Lys177) interacts with substrate. Residues Lys201, Asp203, and Glu204 each contribute to the Mg(2+) site. Lys201 is subject to N6-carboxylysine. His294 serves as the catalytic Proton acceptor. Substrate-binding residues include Arg295, His327, and Ser379.

The protein belongs to the RuBisCO large chain family. Type I subfamily. As to quaternary structure, heterohexadecamer of 8 large chains and 8 small chains; disulfide-linked. The disulfide link is formed within the large subunit homodimers. Requires Mg(2+) as cofactor. The disulfide bond which can form in the large chain dimeric partners within the hexadecamer appears to be associated with oxidative stress and protein turnover.

It is found in the plastid. Its subcellular location is the chloroplast. It catalyses the reaction 2 (2R)-3-phosphoglycerate + 2 H(+) = D-ribulose 1,5-bisphosphate + CO2 + H2O. The catalysed reaction is D-ribulose 1,5-bisphosphate + O2 = 2-phosphoglycolate + (2R)-3-phosphoglycerate + 2 H(+). RuBisCO catalyzes two reactions: the carboxylation of D-ribulose 1,5-bisphosphate, the primary event in carbon dioxide fixation, as well as the oxidative fragmentation of the pentose substrate in the photorespiration process. Both reactions occur simultaneously and in competition at the same active site. The protein is Ribulose bisphosphate carboxylase large chain of Atriplex rosea (Red orache).